Here is a 255-residue protein sequence, read N- to C-terminus: MLARRLIPCLDVRDGRVVKGVRFRDHEDVGDIVDLARRYAREGADELVFYDIAASARGRTVEPEWVSAVARELDIPFCVAGGIRSVDDARARLFAGADKISVNTPALEDPTIIDRLAAEFGSQCVVLGVDSRMIEGAWRVHQYTGDPDKSFAGHRRTLDWIGEGVDRGAGEVVLNCMDQDGVRDGYDIAQLEAARAMCSTPLIASGGAGRKEHFKSVFELAKVDGALAASVFHKGVIEIGQLKSWLDGEGIRVRP.

Active-site residues include D11 and D130.

Belongs to the HisA/HisF family. As to quaternary structure, heterodimer of HisH and HisF.

The protein localises to the cytoplasm. It catalyses the reaction 5-[(5-phospho-1-deoxy-D-ribulos-1-ylimino)methylamino]-1-(5-phospho-beta-D-ribosyl)imidazole-4-carboxamide + L-glutamine = D-erythro-1-(imidazol-4-yl)glycerol 3-phosphate + 5-amino-1-(5-phospho-beta-D-ribosyl)imidazole-4-carboxamide + L-glutamate + H(+). The protein operates within amino-acid biosynthesis; L-histidine biosynthesis; L-histidine from 5-phospho-alpha-D-ribose 1-diphosphate: step 5/9. In terms of biological role, IGPS catalyzes the conversion of PRFAR and glutamine to IGP, AICAR and glutamate. The HisF subunit catalyzes the cyclization activity that produces IGP and AICAR from PRFAR using the ammonia provided by the HisH subunit. The protein is Imidazole glycerol phosphate synthase subunit HisF of Maricaulis maris (strain MCS10) (Caulobacter maris).